The primary structure comprises 274 residues: Serine/threonine-protein kinase 1 (274 aa).

The 249-residue stretch at 17–265 (ARTALHLVNG…YEVIQKNTYW (249 aa)) folds into the Protein kinase domain. Residues 23–31 (LVNGKFGKV) and lysine 46 contribute to the ATP site. Aspartate 133 serves as the catalytic Proton acceptor.

The protein belongs to the protein kinase superfamily. Ser/Thr protein kinase family.

It carries out the reaction L-seryl-[protein] + ATP = O-phospho-L-seryl-[protein] + ADP + H(+). The catalysed reaction is L-threonyl-[protein] + ATP = O-phospho-L-threonyl-[protein] + ADP + H(+). In vitro, can phosphorylate histone H1. This chain is Serine/threonine-protein kinase 1 (PK1), found in Lymantria dispar multicapsid nuclear polyhedrosis virus (LdMNPV).